We begin with the raw amino-acid sequence, 604 residues long: Glutamine--fructose-6-phosphate aminotransferase [isomerizing] (604 aa).

Cys2 functions as the Nucleophile; for GATase activity in the catalytic mechanism. Residues 2–219 (CGIMGAVSER…EGDSACVTTQ (218 aa)) enclose the Glutamine amidotransferase type-2 domain. 2 consecutive SIS domains span residues 279–427 (LRAS…DNRA) and 454–594 (LASL…VDQP). Lys599 (for Fru-6P isomerization activity) is an active-site residue.

Homodimer.

The protein resides in the cytoplasm. It carries out the reaction D-fructose 6-phosphate + L-glutamine = D-glucosamine 6-phosphate + L-glutamate. Functionally, catalyzes the first step in hexosamine metabolism, converting fructose-6P into glucosamine-6P using glutamine as a nitrogen source. This chain is Glutamine--fructose-6-phosphate aminotransferase [isomerizing], found in Legionella pneumophila (strain Paris).